A 93-amino-acid chain; its full sequence is Small ribosomal subunit protein bS18c (93 aa).

Belongs to the bacterial ribosomal protein bS18 family. In terms of assembly, part of the 30S ribosomal subunit.

The protein localises to the plastid. Its subcellular location is the chloroplast. The protein is Small ribosomal subunit protein bS18c of Pinus koraiensis (Korean pine).